Here is a 295-residue protein sequence, read N- to C-terminus: MSKHIGIFGLGAMGTALAAKYLEHGYKTSVWNRTTAKAIPLVEQGAKLASTISEGVNANDLIIICLLNNQVVEDALRDALQTLPSKTIVNLTNGTPNQARKLADFVTSHGARYIHGGIMAVPTMIGSPHAVLLYSGESLELFQSIESHLSLLGMSKYLGTDAGSASLHDLALLSGMYGLFSGFLHAVALIKSGQDTSTTATGLLPLLTPWLSAMTGYLSSIAKQIDDGDYATQGSNLGMQLAGVENIIRAGEEQRVSSQMILPIKALIEQAVGEGHGGEDLSALIEYFKVGKNVD.

A signal peptide spans 1–18; it reads MSKHIGIFGLGAMGTALA. NADP(+) is bound at residue 6–20; that stretch reads GIFGLGAMGTALAAK.

It belongs to the HIBADH-related family. Homodimer. It depends on NADPH as a cofactor.

Its function is as follows. NADPH-dependent reductive aminase that catalyzes the reductive coupling of a broad set of carbonyl compounds with a variety of primary and secondary amines. Possesses remarkably high activity for the reductive amination of ketones and amines, often with high stereoselectivity and in some cases with ketone:amine ratios as low as 1:1. The cofactor NADPH, the carbonyl compound and the amine are added to the enzyme in that sequence, followed by the release of product, NADP(+) being released at last. RedAm is also able to act in the reverse, oxidative direction and exhibits activity in the dehydrogenation of amines to yield imines. The highest activity is found for 1-methyl-tetrahydroquinoline and acyclic amines are also found to be transformed. This Aspergillus oryzae (strain ATCC 42149 / RIB 40) (Yellow koji mold) protein is NADPH-dependent reductive aminase.